Reading from the N-terminus, the 581-residue chain is Leucine-rich repeat transmembrane neuronal protein 3 (581 aa).

An N-terminal signal peptide occupies residues 1 to 30; that stretch reads MGFNVIRLLSGSAVALVIAPTVLLTMLSSA. An LRRNT domain is found at 31–61; it reads ERGCPKGCRCEGKMVYCESQKLQEIPSSISA. The Extracellular portion of the chain corresponds to 31–419; that stretch reads ERGCPKGCRC…ADAEHISFHK (389 aa). LRR repeat units follow at residues 63-83, 86-107, 110-131, 134-155, 158-179, 182-203, 206-226, 230-251, 254-275, and 279-300; these read CLGLSLRYNSLQKLKYNQFKG, QLTWLYLDHNHISNIDENAFNG, RLKELILSSNRISYFLNNTFRP, NLRNLDLSYNQLHSLGSEQFRG, KLLSLHLRSNSLRTIPVRIFQD, NLELLDLGYNRIRSLARNVFAG, RLKELHLEHNQFSKLNLALFP, SLQNLYLQWNKISVIGQTMSWT, SLQRLDLSGNEIEAFSGPSVFQ, and NLQRLNLDSNKLTFIGQEILDS. N-linked (GlcNAc...) asparagine glycosylation is present at Asn126. Residues 312 to 363 form the LRRCT domain; the sequence is NIWECSRNICSLVNWLKSFKGLRENTIICASPKELQGVNVIDAVKNYSICGK. Residue Asn357 is glycosylated (N-linked (GlcNAc...) asparagine). The interval 377–408 is disordered; it reads KPTFKPKLPRPKHESKPPLPPTVGATEPGPET. The helical transmembrane segment at 420-440 threads the bilayer; sequence IIAGSVALFLSVLVILLVIYV. Over 441–581 the chain is Cytoplasmic; it reads SWKRYPASMK…RISDHKQQLA (141 aa).

Belongs to the LRRTM family. In terms of tissue distribution, expressed in neuronal tissues.

The protein localises to the cell membrane. The protein resides in the postsynaptic cell membrane. Its function is as follows. Exhibits a limited synaptogenic activity in vitro, restricted to excitatory presynaptic differentiation. May play a role in the development and maintenance of the vertebrate nervous system. This is Leucine-rich repeat transmembrane neuronal protein 3 (LRRTM3) from Homo sapiens (Human).